Reading from the N-terminus, the 182-residue chain is Large ribosomal subunit protein uL5c (182 aa).

The protein belongs to the universal ribosomal protein uL5 family. In terms of assembly, part of the 50S ribosomal subunit; contacts the 5S rRNA.

The protein localises to the plastid. It is found in the chloroplast. Its function is as follows. Binds 5S rRNA, forms part of the central protuberance of the 50S subunit. The polypeptide is Large ribosomal subunit protein uL5c (rpl5) (Emiliania huxleyi (Coccolithophore)).